A 363-amino-acid chain; its full sequence is Spindle pole body component SPC42 (363 aa).

Residues 60–137 (EFINKAVQQN…ANSTFKEMRF (78 aa)) adopt a coiled-coil conformation. The tract at residues 160 to 184 (PKHRAPDATGNPRTTNKVSNTSDQD) is disordered. Over residues 170–182 (NPRTTNKVSNTSD) the composition is skewed to polar residues. Phosphoserine is present on residues Ser213, Ser217, Ser284, and Ser329. A coiled-coil region spans residues 249 to 298 (DIMMYESAELKRVEEEIEELKRKILVRKKHDLRKLSLNNQLQELQSMMDG). Residues 310–363 (HNHATHRHSSQSSRDYSPSSDACLECSNDLYEKNRVKPENNMSETFATPTPNNR) are disordered. Residues 319–329 (SQSSRDYSPSS) show a composition bias toward low complexity. Residues 349–363 (NNMSETFATPTPNNR) show a composition bias toward polar residues.

This sequence belongs to the SPC42 family. In terms of assembly, component of the SPC110 complex containing at least CMD1, SPC29, SPC42 and SCP110.

It localises to the nucleus. The protein localises to the cytoplasm. The protein resides in the cytoskeleton. Its subcellular location is the microtubule organizing center. It is found in the spindle pole body. In terms of biological role, forms a polymeric layer at the periphery of the spindle pole body (SPB) central plaque which has an essential function during SPB duplication and may facilitate attachment of the SPB to the nuclear membrane. This is Spindle pole body component SPC42 (SPC42) from Saccharomyces cerevisiae (strain ATCC 204508 / S288c) (Baker's yeast).